The following is a 409-amino-acid chain: F-box/kelch-repeat protein At1g48625 (409 aa).

One can recognise an F-box domain in the interval alanine 2–methionine 49. 2 Kelch repeats span residues phenylalanine 169–asparagine 218 and tryptophan 221–cysteine 266.

The chain is F-box/kelch-repeat protein At1g48625 from Arabidopsis thaliana (Mouse-ear cress).